The chain runs to 764 residues: MTQTSERKSSAVEVEPGVFESVALIDNGSYGTRTVRFETGRLARQAAGSVVAYLDDETMLLSATTAGKTPKDQFDFFPLTVDVEERMYAAGRIPGSFFRREGRPSTDAILTCRLIDRPLRPSFVDGLRNEVQVVVTVLSLDPKDLYDVVAINAASASTQIAGLPFSGPVGGVRVALIPDQGANSAGGGQWVAFPTVEQLEGAVFDMVVAGRVVESGDVAIMMVEAEATEKVIELVEGGAQAPTEAVVAEGLEAAKPFIARLCRAQQDLAELAAKPTEEFPLFPPYGPDVYEAVEGAAEAELGEALSIAGKQEREEKIDEIKLAVLDRLAEQFAGREKELGAAFRSVTKKLVRQRILTDGFRIDGRGLADIRALSAEVAVVPRAHGSALFERGETQILGVTTLDMVKMAQQVDSLGPETSKRYMHHYNFPPFSTGETGRVGSPKRREIGHGALAERALIPVLPSQEDFPYAIRQVSEALGSNGSTSMGSVCASTLSLLNAGVPLKAPVAGIAMGLVSDTVTNDKGEQEVRYVALTDILGAEDAFGDMDFKVAGTREFVTALQLDTKLDGIPSQVLAGALSQAHDARTTILDVMAEAIATPDEMSPYAPRVTAIKIPVDKIGEVIGPKGKVINQITEDTGANISIEDDGTVFVGATDGPSAQAAIDAINAIANPQLPKVGERFLGTVVKTTAFGAFVSLLPGRDGLVHISKLGNGKRVAKVEDVVNVGDKLRVEIADIDNRGKISLVPVDENADEPAADAVDAGTE.

Residues D541 and D547 each contribute to the Mg(2+) site. The KH domain maps to 607-666 (PRVTAIKIPVDKIGEVIGPKGKVINQITEDTGANISIEDDGTVFVGATDGPSAQAAIDAI). The 70-residue stretch at 678–747 (GERFLGTVVK…NRGKISLVPV (70 aa)) folds into the S1 motif domain.

The protein belongs to the polyribonucleotide nucleotidyltransferase family. It depends on Mg(2+) as a cofactor.

It localises to the cytoplasm. The catalysed reaction is RNA(n+1) + phosphate = RNA(n) + a ribonucleoside 5'-diphosphate. Its function is as follows. Involved in mRNA degradation. Catalyzes the phosphorolysis of single-stranded polyribonucleotides processively in the 3'- to 5'-direction. This Nocardia farcinica (strain IFM 10152) protein is Polyribonucleotide nucleotidyltransferase.